Here is a 301-residue protein sequence, read N- to C-terminus: Glycine--tRNA ligase alpha subunit (301 aa).

This sequence belongs to the class-II aminoacyl-tRNA synthetase family. In terms of assembly, tetramer of two alpha and two beta subunits.

Its subcellular location is the cytoplasm. The enzyme catalyses tRNA(Gly) + glycine + ATP = glycyl-tRNA(Gly) + AMP + diphosphate. The chain is Glycine--tRNA ligase alpha subunit from Shewanella loihica (strain ATCC BAA-1088 / PV-4).